Here is a 336-residue protein sequence, read N- to C-terminus: Putative bifunctional cytochrome c-type biogenesis protein CcmAE (336 aa).

The tract at residues 1-199 (MLEARDLYCE…ADTVRRLALT (199 aa)) is cytochrome c biogenesis ATP-binding export protein CcmA 2. In terms of domain architecture, ABC transporter spans 2–242 (LEARDLYCER…VGQRLRVGGM (241 aa)). ATP is bound at residue 34-41 (GGNGAGKT). The segment at 196 to 336 (LALTTALVLY…PQRVDKDTSS (141 aa)) is cytochrome c-type biogenesis protein CcmE 2. Heme contacts are provided by His307 and Tyr311. The interval 307 to 336 (HDENYTPPEVEKAMQENHRRPQRVDKDTSS) is disordered.

It in the N-terminal section; belongs to the ABC transporter superfamily. CcmA exporter (TC 3.A.1.107) family. This sequence in the C-terminal section; belongs to the CcmE/CycJ family.

It is found in the cell inner membrane. It carries out the reaction heme b(in) + ATP + H2O = heme b(out) + ADP + phosphate + H(+). In terms of biological role, part of the ABC transporter complex CcmAB involved in the biogenesis of c-type cytochromes; once thought to export heme, this seems not to be the case, but its exact role is uncertain. Responsible for energy coupling to the transport system. Its function is as follows. Heme chaperone required for the biogenesis of c-type cytochromes. Transiently binds heme delivered by CcmC and transfers the heme to apo-cytochromes in a process facilitated by CcmF and CcmH. The sequence is that of Putative bifunctional cytochrome c-type biogenesis protein CcmAE (ccmAE) from Salmonella choleraesuis (strain SC-B67).